The chain runs to 266 residues: UPF0354 protein lmo1608 (266 aa).

Belongs to the UPF0354 family.

In Listeria monocytogenes serovar 1/2a (strain ATCC BAA-679 / EGD-e), this protein is UPF0354 protein lmo1608.